The chain runs to 226 residues: ATP synthase subunit a (226 aa).

7 helical membrane-spanning segments follow: residues 18-38 (FIIG…ARYA), 44-64 (VVPS…ISFA), 79-99 (LAAT…IPGF), 105-125 (SWSF…FEGI), 137-157 (FMGP…ISHF), 177-197 (FLLV…FAIL), and 202-222 (LLQA…AVVV).

This sequence belongs to the ATPase A chain family. F-type ATPases have 2 components, CF(1) - the catalytic core - and CF(0) - the membrane proton channel. CF(1) has five subunits: alpha(3), beta(3), gamma(1), delta(1), epsilon(1). CF(0) has three main subunits: a(1), b(2) and c(9-12). The alpha and beta chains form an alternating ring which encloses part of the gamma chain. CF(1) is attached to CF(0) by a central stalk formed by the gamma and epsilon chains, while a peripheral stalk is formed by the delta and b chains.

The protein resides in the cell inner membrane. Its function is as follows. Key component of the proton channel; it plays a direct role in the translocation of protons across the membrane. This chain is ATP synthase subunit a, found in Helicobacter hepaticus (strain ATCC 51449 / 3B1).